The chain runs to 101 residues: Small ribosomal subunit protein uS14A (101 aa).

The disordered stretch occupies residues 31-67; the sequence is LRRPSSTEAERLAAQRELRRQPRDASPTRVRNRDQID. A compositionally biased stretch (basic and acidic residues) spans 38-53; that stretch reads EAERLAAQRELRRQPR.

The protein belongs to the universal ribosomal protein uS14 family. In terms of assembly, part of the 30S ribosomal subunit. Contacts proteins S3 and S10.

In terms of biological role, binds 16S rRNA, required for the assembly of 30S particles and may also be responsible for determining the conformation of the 16S rRNA at the A site. The chain is Small ribosomal subunit protein uS14A from Streptomyces coelicolor (strain ATCC BAA-471 / A3(2) / M145).